Consider the following 222-residue polypeptide: Peptide methionine sulfoxide reductase MsrA (222 aa).

The active site involves Cys55.

This sequence belongs to the MsrA Met sulfoxide reductase family.

The enzyme catalyses L-methionyl-[protein] + [thioredoxin]-disulfide + H2O = L-methionyl-(S)-S-oxide-[protein] + [thioredoxin]-dithiol. The catalysed reaction is [thioredoxin]-disulfide + L-methionine + H2O = L-methionine (S)-S-oxide + [thioredoxin]-dithiol. Its function is as follows. Has an important function as a repair enzyme for proteins that have been inactivated by oxidation. Catalyzes the reversible oxidation-reduction of methionine sulfoxide in proteins to methionine. In Streptomyces griseus subsp. griseus (strain JCM 4626 / CBS 651.72 / NBRC 13350 / KCC S-0626 / ISP 5235), this protein is Peptide methionine sulfoxide reductase MsrA.